The sequence spans 298 residues: Cyclin-dependent kinase 2 homolog (298 aa).

One can recognise a Protein kinase domain in the interval 4–284; it reads YHKMEKIGEG…AKEALKHDYF (281 aa). ATP contacts are provided by residues 10-18 and lysine 32; that span reads IGEGTYGVV. Threonine 14 bears the Phosphothreonine mark. Tyrosine 15 carries the phosphotyrosine modification. The Proton acceptor role is filled by aspartate 125. Threonine 158 carries the phosphothreonine modification.

The protein belongs to the protein kinase superfamily. CMGC Ser/Thr protein kinase family. CDC2/CDKX subfamily. As to quaternary structure, may form a complex composed of at least the catalytic subunit CRK2 and a cyclin. Requires Mg(2+) as cofactor.

The protein localises to the cytoplasm. The catalysed reaction is L-seryl-[protein] + ATP = O-phospho-L-seryl-[protein] + ADP + H(+). It carries out the reaction L-threonyl-[protein] + ATP = O-phospho-L-threonyl-[protein] + ADP + H(+). It catalyses the reaction [DNA-directed RNA polymerase] + ATP = phospho-[DNA-directed RNA polymerase] + ADP + H(+). Its activity is regulated as follows. Phosphorylation at Thr-14 or Tyr-15 inactivates the enzyme, while phosphorylation at Thr-158 activates it. Serine/threonine-protein kinase. Involved in the control of the cell cycle. Required for entry into S-phase and mitosis. Probable component of the kinase complex that phosphorylates the repetitive C-terminus of RNA polymerase II. The polypeptide is Cyclin-dependent kinase 2 homolog (Theileria parva (East coast fever infection agent)).